A 236-amino-acid polypeptide reads, in one-letter code: V-set and transmembrane domain-containing protein 2A (236 aa).

The N-terminal stretch at 1 to 24 is a signal peptide; sequence MMGIFLVYVGFVFFSVLYVQQGLS. Residues 27–143 form the Ig-like V-type domain; the sequence is AKFTEFPRNV…YGELQEHKAQ (117 aa). Asn-35 carries an N-linked (GlcNAc...) asparagine glycan. A disulfide bridge connects residues Cys-48 and Cys-127. An N-linked (GlcNAc...) asparagine glycan is attached at Asn-175. Over residues 184-199 the composition is skewed to polar residues; sequence IHGSANQRTHSTSSPQ. Residues 184–206 are disordered; that stretch reads IHGSANQRTHSTSSPQVVAKIPK.

Homodimer. N-glycosylated. N-linked glycosylation is critical for secretion but not for preadipocyte cell differentiation activity.

It localises to the secreted. Functionally, plays a role in the regulation of the early stage of white and brown preadipocyte cell differentiation. Promotes adipogenic commitment of preadipocytes by increasing gene expression of the transcription factor PPARG in a BMP4-dependent signaling pathway. The polypeptide is V-set and transmembrane domain-containing protein 2A (Homo sapiens (Human)).